The primary structure comprises 205 residues: Holliday junction branch migration complex subunit RuvA (205 aa).

Positions 1–64 (MIGRLRGVLI…EDAQLLYGFI (64 aa)) are domain I. Residues 65-143 (TKKERSLFRL…SLMEASVGSE (79 aa)) form a domain II region. The interval 144–156 (REFVLQSNYSPAP) is flexible linker. The domain III stretch occupies residues 157–205 (TVNSAEEDAISALLSLGYKPPQASKAVSAAYKEGMDSETLIKAALKSML).

It belongs to the RuvA family. Homotetramer. Forms an RuvA(8)-RuvB(12)-Holliday junction (HJ) complex. HJ DNA is sandwiched between 2 RuvA tetramers; dsDNA enters through RuvA and exits via RuvB. An RuvB hexamer assembles on each DNA strand where it exits the tetramer. Each RuvB hexamer is contacted by two RuvA subunits (via domain III) on 2 adjacent RuvB subunits; this complex drives branch migration. In the full resolvosome a probable DNA-RuvA(4)-RuvB(12)-RuvC(2) complex forms which resolves the HJ.

Its subcellular location is the cytoplasm. Functionally, the RuvA-RuvB-RuvC complex processes Holliday junction (HJ) DNA during genetic recombination and DNA repair, while the RuvA-RuvB complex plays an important role in the rescue of blocked DNA replication forks via replication fork reversal (RFR). RuvA specifically binds to HJ cruciform DNA, conferring on it an open structure. The RuvB hexamer acts as an ATP-dependent pump, pulling dsDNA into and through the RuvAB complex. HJ branch migration allows RuvC to scan DNA until it finds its consensus sequence, where it cleaves and resolves the cruciform DNA. The sequence is that of Holliday junction branch migration complex subunit RuvA from Shewanella sp. (strain MR-4).